Consider the following 308-residue polypeptide: Serine/threonine-protein phosphatase 4 catalytic subunit (308 aa).

Mn(2+) contacts are provided by Asp-51, His-53, Asp-79, and Asn-111. The active-site Proton donor is the His-112. The Mn(2+) site is built by His-161 and His-235.

The protein belongs to the PPP phosphatase family. PP-4 (PP-X) subfamily. Catalytic subunit of the histone H2A phosphatase complex (HTP-C) containing PPH3, PSY2 and PSY4. Inactivated in a complex with phosphatase methylesterase PPE1 (PP2Ai). Interacts with phosphatase 2A activator RRD1, which can reactivate PP2Ai by dissociating the catalytic subunit from the complex. Interacts with SPT5 and TAP42. It depends on Mn(2+) as a cofactor. Post-translationally, reversibly methyl esterified on Leu-308 by leucine carboxyl methyltransferase 1 (PPM1) and protein phosphatase methylesterase 1 (PPE1). Carboxyl methylation influences the affinity of the catalytic subunit for the different regulatory subunits, thereby modulating the PP2A holoenzyme's substrate specificity, enzyme activity and cellular localization.

The protein localises to the cytoplasm. It is found in the nucleus. It carries out the reaction O-phospho-L-seryl-[protein] + H2O = L-seryl-[protein] + phosphate. The enzyme catalyses O-phospho-L-threonyl-[protein] + H2O = L-threonyl-[protein] + phosphate. In terms of biological role, forms the histone H2A phosphatase complex in association with the regulatory subunits PSY2 and PSY4, which dephosphorylates H2AS128ph (gamma-H2A) that has been displaced from sites of DNA lesions in the double-stranded DNA break repair process. Dephosphorylation is necessary for efficient recovery from the DNA damage checkpoint. PPH3 is directly involved in the dephosphorylation and activation of the transcription factor GLN3 in response to nutrient availability. In Saccharomyces cerevisiae (strain ATCC 204508 / S288c) (Baker's yeast), this protein is Serine/threonine-protein phosphatase 4 catalytic subunit (PPH3).